Reading from the N-terminus, the 187-residue chain is Protein GrpE (187 aa).

Low complexity predominate over residues methionine 1 to glutamate 17. Residues methionine 1 to glutamate 27 form a disordered region.

Belongs to the GrpE family. As to quaternary structure, homodimer.

It is found in the cytoplasm. Its function is as follows. Participates actively in the response to hyperosmotic and heat shock by preventing the aggregation of stress-denatured proteins, in association with DnaK and GrpE. It is the nucleotide exchange factor for DnaK and may function as a thermosensor. Unfolded proteins bind initially to DnaJ; upon interaction with the DnaJ-bound protein, DnaK hydrolyzes its bound ATP, resulting in the formation of a stable complex. GrpE releases ADP from DnaK; ATP binding to DnaK triggers the release of the substrate protein, thus completing the reaction cycle. Several rounds of ATP-dependent interactions between DnaJ, DnaK and GrpE are required for fully efficient folding. The chain is Protein GrpE from Thioalkalivibrio sulfidiphilus (strain HL-EbGR7).